The sequence spans 112 residues: Large ribosomal subunit protein P2 (112 aa).

The segment covering 69-85 (AGGAAMPAAAAGGAPAA) has biased composition (low complexity). Residues 69–112 (AGGAAMPAAAAGGAPAAAEDKAEAKKPEAEPEEEEDDMGFSLFD) form a disordered region. The span at 86–97 (AEDKAEAKKPEA) shows a compositional bias: basic and acidic residues.

Belongs to the eukaryotic ribosomal protein P1/P2 family. P1 and P2 exist as dimers at the large ribosomal subunit. Phosphorylated.

Functionally, plays an important role in the elongation step of protein synthesis. This is Large ribosomal subunit protein P2 from Babesia bovis.